The following is a 496-amino-acid chain: Cytochrome P450 71D18 (496 aa).

Residues 2 to 22 (ELDLLSAIIILVATYIVSLLI) traverse the membrane as a helical; Signal-anchor for type II membrane protein segment. Cysteine 436 serves as a coordination point for heme.

Belongs to the cytochrome P450 family. Heme is required as a cofactor.

It localises to the endoplasmic reticulum membrane. It catalyses the reaction (4S)-limonene + reduced [NADPH--hemoprotein reductase] + O2 = (1S,5R)-carveol + oxidized [NADPH--hemoprotein reductase] + H2O + H(+). Functionally, hydroxylates (-)-(4S)-limonene to (-)-trans-carveol, a precursor of (-)-carvone. Fluorinated substrate analogs are hydroxylated with the same regio- and stereochemistry. The protein is Cytochrome P450 71D18 (CYP71D18) of Mentha gracilis (Gingermint).